A 422-amino-acid polypeptide reads, in one-letter code: 5'-deoxyadenosine deaminase (422 aa).

Zn(2+)-binding residues include histidine 57 and histidine 59. Residues glutamate 86 and histidine 178 each coordinate substrate. Histidine 205 lines the Zn(2+) pocket. The substrate site is built by glutamate 208 and aspartate 294. A Zn(2+)-binding site is contributed by aspartate 294.

The protein belongs to the metallo-dependent hydrolases superfamily. MTA/SAH deaminase family. As to quaternary structure, homotetramer. It depends on Zn(2+) as a cofactor.

It carries out the reaction 5'-deoxyadenosine + H2O + H(+) = 5'-deoxyinosine + NH4(+). The catalysed reaction is S-adenosyl-L-homocysteine + H2O + H(+) = S-inosyl-L-homocysteine + NH4(+). It catalyses the reaction S-methyl-5'-thioadenosine + H2O + H(+) = S-methyl-5'-thioinosine + NH4(+). The enzyme catalyses adenosine + H2O + H(+) = inosine + NH4(+). It participates in amino-acid biosynthesis; S-adenosyl-L-methionine biosynthesis. In terms of biological role, catalyzes the deamination of three SAM-derived enzymatic products, namely 5'-deoxyadenosine, S-adenosyl-L-homocysteine, and 5'-methylthioadenosine, to produce the inosine analogs. Can also deaminate adenosine. The preferred substrate for this enzyme is 5'-deoxyadenosine, but all these substrates are efficiently deaminated. Likely functions in a S-adenosyl-L-methionine (SAM) recycling pathway from S-adenosyl-L-homocysteine (SAH) produced from SAM-dependent methylation reactions. May also be involved in the recycling of 5'-deoxyadenosine, whereupon the 5'-deoxyribose moiety of 5'-deoxyinosine is further metabolized to deoxyhexoses used for the biosynthesis of aromatic amino acids in methanogens. The protein is 5'-deoxyadenosine deaminase of Methanococcus maripaludis (strain C7 / ATCC BAA-1331).